The sequence spans 487 residues: Probable glycine dehydrogenase (decarboxylating) subunit 2 (487 aa).

Residue lysine 269 is modified to N6-(pyridoxal phosphate)lysine.

This sequence belongs to the GcvP family. C-terminal subunit subfamily. As to quaternary structure, the glycine cleavage system is composed of four proteins: P, T, L and H. In this organism, the P 'protein' is a heterodimer of two subunits. Pyridoxal 5'-phosphate is required as a cofactor.

It catalyses the reaction N(6)-[(R)-lipoyl]-L-lysyl-[glycine-cleavage complex H protein] + glycine + H(+) = N(6)-[(R)-S(8)-aminomethyldihydrolipoyl]-L-lysyl-[glycine-cleavage complex H protein] + CO2. The glycine cleavage system catalyzes the degradation of glycine. The P protein binds the alpha-amino group of glycine through its pyridoxal phosphate cofactor; CO(2) is released and the remaining methylamine moiety is then transferred to the lipoamide cofactor of the H protein. This is Probable glycine dehydrogenase (decarboxylating) subunit 2 from Prosthecochloris aestuarii (strain DSM 271 / SK 413).